Reading from the N-terminus, the 151-residue chain is uncharacterized protein (151 aa).

4Fe-4S ferredoxin-type domains lie at 4-32 (KIIV…ESRV), 33-63 (RKVD…YLKD), and 64-93 (GIPI…IKNR). [4Fe-4S] cluster is bound by residues C13, C16, C19, C23, C42, C45, C50, C54, C73, C76, C79, C83, C98, C101, C111, and C115.

It depends on [4Fe-4S] cluster as a cofactor.

This is an uncharacterized protein from Methanocaldococcus jannaschii (strain ATCC 43067 / DSM 2661 / JAL-1 / JCM 10045 / NBRC 100440) (Methanococcus jannaschii).